A 151-amino-acid polypeptide reads, in one-letter code: UPF0178 protein YaiI (151 aa).

This sequence belongs to the UPF0178 family.

The polypeptide is UPF0178 protein YaiI (Salmonella paratyphi B (strain ATCC BAA-1250 / SPB7)).